The primary structure comprises 548 residues: DNA ligase (548 aa).

Glu244 contacts ATP. Residue Lys246 is the N6-AMP-lysine intermediate of the active site. Arg251, Arg266, Glu295, Phe334, Arg405, and Lys411 together coordinate ATP.

This sequence belongs to the ATP-dependent DNA ligase family. Mg(2+) serves as cofactor.

It catalyses the reaction ATP + (deoxyribonucleotide)n-3'-hydroxyl + 5'-phospho-(deoxyribonucleotide)m = (deoxyribonucleotide)n+m + AMP + diphosphate.. Its function is as follows. DNA ligase that seals nicks in double-stranded DNA during DNA replication, DNA recombination and DNA repair. This chain is DNA ligase, found in Methanoculleus marisnigri (strain ATCC 35101 / DSM 1498 / JR1).